We begin with the raw amino-acid sequence, 1009 residues long: UvrABC system protein A (1009 aa).

32–39 provides a ligand contact to ATP; the sequence is GLSGSGKS. 2 ABC transporter domains span residues 314 to 592 and 612 to 941; these read WSHG…AESQ and RDPS…KFLR. 645–652 contacts ATP; sequence GVSGSGKS. The C4-type zinc finger occupies 744-770; sequence CENCSGDGTIKIEMNFLPDVYVPCEVC. Positions 956–1009 are disordered; sequence KAPRKTAARKTAAAKSTTKKTATVRTTNNTATKKAAAVTKKTAPAKKTTRARKA. A compositionally biased stretch (low complexity) spans 964–997; sequence RKTAAAKSTTKKTATVRTTNNTATKKAAAVTKKT. Basic residues predominate over residues 998–1009; the sequence is APAKKTTRARKA.

The protein belongs to the ABC transporter superfamily. UvrA family. As to quaternary structure, forms a heterotetramer with UvrB during the search for lesions.

It localises to the cytoplasm. Its function is as follows. The UvrABC repair system catalyzes the recognition and processing of DNA lesions. UvrA is an ATPase and a DNA-binding protein. A damage recognition complex composed of 2 UvrA and 2 UvrB subunits scans DNA for abnormalities. When the presence of a lesion has been verified by UvrB, the UvrA molecules dissociate. The polypeptide is UvrABC system protein A (Streptomyces avermitilis (strain ATCC 31267 / DSM 46492 / JCM 5070 / NBRC 14893 / NCIMB 12804 / NRRL 8165 / MA-4680)).